The following is a 379-amino-acid chain: Putative zinc metalloprotease sll0528 (379 aa).

Helical transmembrane passes span 20-40 and 54-74; these read LFGI…LVTL and GGTP…SVVA. Residue His75 coordinates Zn(2+). Glu76 is a catalytic residue. Position 79 (His79) interacts with Zn(2+). 3 helical membrane passes run 115 to 135, 148 to 168, and 212 to 232; these read FAVA…LTIV, IIGL…IPGL, and GILN…WFLL. CBS domains lie at 257–315 and 322–379; these read VIPN…DWPQ and MQYP…TSAA.

The protein belongs to the peptidase M50B family. Requires Zn(2+) as cofactor.

It localises to the cell membrane. The polypeptide is Putative zinc metalloprotease sll0528 (Synechocystis sp. (strain ATCC 27184 / PCC 6803 / Kazusa)).